Consider the following 72-residue polypeptide: Translation initiation factor IF-1 (72 aa).

The region spanning 1–72 (MARDDVIEVD…DRGRITFRYK (72 aa)) is the S1-like domain.

It belongs to the IF-1 family. In terms of assembly, component of the 30S ribosomal translation pre-initiation complex which assembles on the 30S ribosome in the order IF-2 and IF-3, IF-1 and N-formylmethionyl-tRNA(fMet); mRNA recruitment can occur at any time during PIC assembly.

Its subcellular location is the cytoplasm. One of the essential components for the initiation of protein synthesis. Stabilizes the binding of IF-2 and IF-3 on the 30S subunit to which N-formylmethionyl-tRNA(fMet) subsequently binds. Helps modulate mRNA selection, yielding the 30S pre-initiation complex (PIC). Upon addition of the 50S ribosomal subunit IF-1, IF-2 and IF-3 are released leaving the mature 70S translation initiation complex. This chain is Translation initiation factor IF-1, found in Helicobacter acinonychis (strain Sheeba).